The sequence spans 312 residues: Coproporphyrin III ferrochelatase (312 aa).

Fe-coproporphyrin III-binding positions include Tyr-13, Arg-30, 46 to 47, Ser-54, and Tyr-125; that span reads RY. 2 residues coordinate Fe(2+): His-182 and Glu-263.

Belongs to the ferrochelatase family.

The protein resides in the cytoplasm. The enzyme catalyses Fe-coproporphyrin III + 2 H(+) = coproporphyrin III + Fe(2+). It participates in porphyrin-containing compound metabolism; protoheme biosynthesis. Functionally, involved in coproporphyrin-dependent heme b biosynthesis. Catalyzes the insertion of ferrous iron into coproporphyrin III to form Fe-coproporphyrin III. The sequence is that of Coproporphyrin III ferrochelatase from Oceanobacillus iheyensis (strain DSM 14371 / CIP 107618 / JCM 11309 / KCTC 3954 / HTE831).